Here is a 366-residue protein sequence, read N- to C-terminus: Chorismate synthase (366 aa).

Arg-48 and Arg-54 together coordinate NADP(+). FMN is bound by residues 125–127 (RSS), 242–243 (NA), Gly-287, 302–306 (KPTSS), and Arg-328.

This sequence belongs to the chorismate synthase family. Homotetramer. The cofactor is FMNH2.

The catalysed reaction is 5-O-(1-carboxyvinyl)-3-phosphoshikimate = chorismate + phosphate. The protein operates within metabolic intermediate biosynthesis; chorismate biosynthesis; chorismate from D-erythrose 4-phosphate and phosphoenolpyruvate: step 7/7. Functionally, catalyzes the anti-1,4-elimination of the C-3 phosphate and the C-6 proR hydrogen from 5-enolpyruvylshikimate-3-phosphate (EPSP) to yield chorismate, which is the branch point compound that serves as the starting substrate for the three terminal pathways of aromatic amino acid biosynthesis. This reaction introduces a second double bond into the aromatic ring system. The polypeptide is Chorismate synthase (Rhodospirillum rubrum (strain ATCC 11170 / ATH 1.1.1 / DSM 467 / LMG 4362 / NCIMB 8255 / S1)).